We begin with the raw amino-acid sequence, 636 residues long: Tumor protein p73 (636 aa).

The segment at 1–46 (MAQSTATSPDGGTTFEHLWSSLEPDSTYFDLPQSSRGNNEVVGGTD) is transactivation. T27 carries the phosphothreonine; by PLK1 modification. The residue at position 28 (Y28) is a Phosphotyrosine; by SRC and HCK. Residues 78–104 (RAASASPYTPEHAASVPTHSPYAQPSS) form a disordered region. Over residues 94–104 (PTHSPYAQPSS) the composition is skewed to polar residues. The residue at position 99 (Y99) is a Phosphotyrosine; by ABL1. A DNA-binding region spans residues 131–310 (FQQSSTAKSA…DRKADEDHYR (180 aa)). Residues C194, H197, C258, and C262 each coordinate Zn(2+). Residues 314-345 (ALNESSAKNGAASKRAFKQSPPAVPALGAGVK) form a disordered region. The segment at 345–380 (KKRRHGDEDTYYLQVRGRENFEILMKLKESLELMEL) is interaction with HIPK2. The oligomerization stretch occupies residues 345-386 (KKRRHGDEDTYYLQVRGRENFEILMKLKESLELMELVPQPLV). The PPxY motif signature appears at 483 to 487 (PPPPY). The region spanning 485–551 (PPYHADPSLV…WRGLQDLKQG (67 aa)) is the SAM domain. A Glycyl lysine isopeptide (Lys-Gly) (interchain with G-Cter in SUMO); in isoform Alpha cross-link involves residue K627. K627 is covalently cross-linked (Glycyl lysine isopeptide (Lys-Gly) (interchain with G-Cter in SUMO2)).

Belongs to the p53 family. As to quaternary structure, found in a complex with p53/TP53 and CABLES1. The C-terminal oligomerization domain binds to the ABL1 tyrosine kinase SH3 domain. Interacts with HECW2. Isoform Beta interacts homotypically and with p53/TP53, whereas isoform Alpha does not. Isoform Gamma interacts homotypically and with all p73 isoforms. Isoform Delta interacts with isoform Gamma, isoform Alpha, and homotypically. Isoforms Alpha and Beta interact with HIPK2. Isoform Alpha interacts with RANBP9. Isoform Beta interacts with WWOX. Interacts (via SAM domain) with FBXO45 (via B30.2/SPRY domain). Interacts with YAP1 (phosphorylated form). Interacts with HCK (via SH3 domain); this inhibits TP73 activity and degradation. Interacts (via SAM domain) with NQO1; this interaction is NADH-dependent, stabilizes TP73 in response to oxidative stress and protects it from ubiquitin-independent degradation by the 20S proteasome. (Microbial infection) Interacts with Epstein-Barr virus protein EBNA6; this interaction inhibits TP73-mediated apoptotic pathway. Zn(2+) serves as cofactor. Isoform alpha (but not isoform beta) is sumoylated on Lys-627, which potentiates proteasomal degradation but does not affect transcriptional activity. Phosphorylation by PLK1 and PLK3 inhibits the transcription regulator activity and pro-apoptotic function. In terms of processing, higher levels of phosphorylation seen in the brain from patients with Huntington disease. Post-translationally, polyubiquitinated by RCHY1/PIRH2; leading to its degradation by the proteasome. As to expression, expressed in striatal neurons of patients with Huntington disease (at protein level). Brain, kidney, placenta, colon, heart, liver, spleen, skeletal muscle, prostate, thymus and pancreas. Highly expressed in fetal tissue. Expressed in the respiratory epithelium.

The protein localises to the nucleus. It is found in the cytoplasm. Its function is as follows. Participates in the apoptotic response to DNA damage. Isoforms containing the transactivation domain are pro-apoptotic, isoforms lacking the domain are anti-apoptotic and block the function of p53 and transactivating p73 isoforms. May be a tumor suppressor protein. Is an activator of FOXJ1 expression. It is an essential factor for the positive regulation of lung ciliated cell differentiation. In Homo sapiens (Human), this protein is Tumor protein p73 (TP73).